The chain runs to 589 residues: Aspartate--tRNA ligase (589 aa).

Residue glutamate 174 coordinates L-aspartate. The tract at residues 198–201 is aspartate; the sequence is QLFK. Position 220 (arginine 220) interacts with L-aspartate. ATP contacts are provided by residues 220-222 and glutamine 229; that span reads RDE. An L-aspartate-binding site is contributed by histidine 448. Position 483 (glutamate 483) interacts with ATP. L-aspartate is bound at residue arginine 490. An ATP-binding site is contributed by 535–538; the sequence is GIDR.

It belongs to the class-II aminoacyl-tRNA synthetase family. Type 1 subfamily. As to quaternary structure, homodimer.

Its subcellular location is the cytoplasm. It carries out the reaction tRNA(Asp) + L-aspartate + ATP = L-aspartyl-tRNA(Asp) + AMP + diphosphate. In terms of biological role, catalyzes the attachment of L-aspartate to tRNA(Asp) in a two-step reaction: L-aspartate is first activated by ATP to form Asp-AMP and then transferred to the acceptor end of tRNA(Asp). The polypeptide is Aspartate--tRNA ligase (Xylella fastidiosa (strain M23)).